The chain runs to 101 residues: uncharacterized protein (101 aa).

The next 2 helical transmembrane spans lie at 35–55 (LWTM…LIII) and 66–86 (FLFF…TLLF).

The protein resides in the membrane. This is an uncharacterized protein from Saccharomyces cerevisiae (strain ATCC 204508 / S288c) (Baker's yeast).